A 105-amino-acid chain; its full sequence is Large ribosomal subunit protein bL21 (105 aa).

The protein belongs to the bacterial ribosomal protein bL21 family. In terms of assembly, part of the 50S ribosomal subunit. Contacts protein L20.

Its function is as follows. This protein binds to 23S rRNA in the presence of protein L20. The polypeptide is Large ribosomal subunit protein bL21 (Frankia casuarinae (strain DSM 45818 / CECT 9043 / HFP020203 / CcI3)).